An 84-amino-acid polypeptide reads, in one-letter code: Large ribosomal subunit protein uL29 (84 aa).

It belongs to the universal ribosomal protein uL29 family.

The protein is Large ribosomal subunit protein uL29 of Mycoplasma mobile (strain ATCC 43663 / 163K / NCTC 11711) (Mesomycoplasma mobile).